The chain runs to 266 residues: Undecaprenyl-diphosphatase (266 aa).

The next 8 helical transmembrane spans lie at 1 to 21 (MDTL…FLPI), 39 to 59 (QGLS…VIYF), 83 to 103 (SKLA…GFTA), 111 to 131 (LRGP…LWFA), 149 to 169 (ALLI…RSGI), 183 to 203 (AAAR…ALLM), 218 to 238 (ALAL…YFFL), and 246 to 266 (MTPF…FIYL).

This sequence belongs to the UppP family.

It localises to the cell inner membrane. The enzyme catalyses di-trans,octa-cis-undecaprenyl diphosphate + H2O = di-trans,octa-cis-undecaprenyl phosphate + phosphate + H(+). Functionally, catalyzes the dephosphorylation of undecaprenyl diphosphate (UPP). Confers resistance to bacitracin. The protein is Undecaprenyl-diphosphatase of Shewanella amazonensis (strain ATCC BAA-1098 / SB2B).